The following is a 363-amino-acid chain: tRNA/tmRNA (uracil-C(5))-methyltransferase (363 aa).

S-adenosyl-L-methionine is bound by residues Q187, Y215, N220, E236, and D296. Residue C321 is the Nucleophile of the active site. Residue E355 is the Proton acceptor of the active site.

Belongs to the class I-like SAM-binding methyltransferase superfamily. RNA M5U methyltransferase family. TrmA subfamily.

The enzyme catalyses uridine(54) in tRNA + S-adenosyl-L-methionine = 5-methyluridine(54) in tRNA + S-adenosyl-L-homocysteine + H(+). It carries out the reaction uridine(341) in tmRNA + S-adenosyl-L-methionine = 5-methyluridine(341) in tmRNA + S-adenosyl-L-homocysteine + H(+). Dual-specificity methyltransferase that catalyzes the formation of 5-methyluridine at position 54 (m5U54) in all tRNAs, and that of position 341 (m5U341) in tmRNA (transfer-mRNA). This is tRNA/tmRNA (uracil-C(5))-methyltransferase from Pseudomonas aeruginosa (strain UCBPP-PA14).